The sequence spans 317 residues: uncharacterized protein (317 aa).

7 helical membrane-spanning segments follow: residues 18 to 38 (FWLISLVVAFLPLGLYGLVII), 58 to 78 (IILSWMLFFLWFNVIVNGFIF), 92 to 112 (FLGSFIYSGGNNFGGVSWWSF), 130 to 150 (LFSASFLLTTSSSIYELAWAV), 159 to 179 (LFHIKVQPISILLAVIFKLLP), 202 to 222 (CSFLNPFKIKTLFIPVLLSTV), and 252 to 272 (NLLNGVFLLVGLLLFSILLIA).

The protein belongs to the CbiQ family.

It is found in the cell membrane. This is an uncharacterized protein from Mycoplasma genitalium (strain ATCC 33530 / DSM 19775 / NCTC 10195 / G37) (Mycoplasmoides genitalium).